Consider the following 145-residue polypeptide: Large ribosomal subunit protein uL11 (145 aa).

It belongs to the universal ribosomal protein uL11 family. Part of the ribosomal stalk of the 50S ribosomal subunit. Interacts with L10 and the large rRNA to form the base of the stalk. L10 forms an elongated spine to which L12 dimers bind in a sequential fashion forming a multimeric L10(L12)X complex. One or more lysine residues are methylated.

Its function is as follows. Forms part of the ribosomal stalk which helps the ribosome interact with GTP-bound translation factors. This chain is Large ribosomal subunit protein uL11, found in Corynebacterium glutamicum (strain ATCC 13032 / DSM 20300 / JCM 1318 / BCRC 11384 / CCUG 27702 / LMG 3730 / NBRC 12168 / NCIMB 10025 / NRRL B-2784 / 534).